Consider the following 218-residue polypeptide: Protein GrpE (218 aa).

The interval 1 to 75 is disordered; that stretch reads MTTPNGMPDN…DVDPDLDGDG (75 aa). Residues 23 to 40 show a composition bias toward basic and acidic residues; it reads SADRAEQAAEEAAARQAE. A compositionally biased stretch (acidic residues) spans 48–75; that stretch reads SEEEISPELEAEINDLLSDVDPDLDGDG.

Belongs to the GrpE family. In terms of assembly, homodimer.

Its subcellular location is the cytoplasm. Functionally, participates actively in the response to hyperosmotic and heat shock by preventing the aggregation of stress-denatured proteins, in association with DnaK and GrpE. It is the nucleotide exchange factor for DnaK and may function as a thermosensor. Unfolded proteins bind initially to DnaJ; upon interaction with the DnaJ-bound protein, DnaK hydrolyzes its bound ATP, resulting in the formation of a stable complex. GrpE releases ADP from DnaK; ATP binding to DnaK triggers the release of the substrate protein, thus completing the reaction cycle. Several rounds of ATP-dependent interactions between DnaJ, DnaK and GrpE are required for fully efficient folding. The polypeptide is Protein GrpE (Corynebacterium glutamicum (strain ATCC 13032 / DSM 20300 / JCM 1318 / BCRC 11384 / CCUG 27702 / LMG 3730 / NBRC 12168 / NCIMB 10025 / NRRL B-2784 / 534)).